Consider the following 1935-residue polypeptide: Myosin heavy chain, fast skeletal muscle (1935 aa).

In terms of domain architecture, Myosin N-terminal SH3-like spans 32–81 (DAKTAFFVVDPDEMYLKGTLVSKEGGKATVKTHSGKTVTVKEDEIFPMNP). The 695-residue stretch at 85–779 (DKIEDMAMMT…LLGALEEMRD (695 aa)) folds into the Myosin motor domain. Lys-129 bears the N6,N6,N6-trimethyllysine mark. An ATP-binding site is contributed by 178-185 (GESGAGKT). 2 actin-binding regions span residues 659-681 (LMTNLRSTHPHFVRCLIPNESKT) and 761-775 (HTKVFFKAGLLGALE). In terms of domain architecture, IQ spans 782–811 (LALLVTMTQALCRGYVMRKEFVKMMERRES). The interval 812–839 (IYSIQYNIRSFMNVKHWPWMKLYFKIKP) is hinge. Positions 840–1935 (LLKSAETEKE…RDAGKSKDEE (1096 aa)) form a coiled coil. Disordered stretches follow at residues 1589 to 1608 (RNSQRVIDSMQSTLDSEVRS) and 1902 to 1935 (HELEEAQERADVAESQVNKLRAKSRDAGKSKDEE). Polar residues predominate over residues 1592-1603 (QRVIDSMQSTLD). Basic and acidic residues-rich tracts occupy residues 1902-1913 (HELEEAQERADV) and 1924-1935 (KSRDAGKSKDEE).

The protein belongs to the TRAFAC class myosin-kinesin ATPase superfamily. Myosin family. Muscle myosin is a hexameric protein that consists of 2 heavy chain subunits (MHC), 2 alkali light chain subunits (MLC) and 2 regulatory light chain subunits (MLC-2).

The protein localises to the cytoplasm. It is found in the myofibril. Its function is as follows. Muscle contraction. The protein is Myosin heavy chain, fast skeletal muscle of Cyprinus carpio (Common carp).